The following is a 265-amino-acid chain: 4-hydroxy-tetrahydrodipicolinate reductase (265 aa).

NAD(+)-binding positions include 7-12 (GASGRM), D33, 96-98 (GTT), and 120-123 (AANF). The Proton donor/acceptor role is filled by H153. Position 154 (H154) interacts with (S)-2,3,4,5-tetrahydrodipicolinate. Residue K157 is the Proton donor of the active site. Residue 163–164 (GT) participates in (S)-2,3,4,5-tetrahydrodipicolinate binding.

The protein belongs to the DapB family.

It localises to the cytoplasm. It carries out the reaction (S)-2,3,4,5-tetrahydrodipicolinate + NAD(+) + H2O = (2S,4S)-4-hydroxy-2,3,4,5-tetrahydrodipicolinate + NADH + H(+). The enzyme catalyses (S)-2,3,4,5-tetrahydrodipicolinate + NADP(+) + H2O = (2S,4S)-4-hydroxy-2,3,4,5-tetrahydrodipicolinate + NADPH + H(+). It participates in amino-acid biosynthesis; L-lysine biosynthesis via DAP pathway; (S)-tetrahydrodipicolinate from L-aspartate: step 4/4. Catalyzes the conversion of 4-hydroxy-tetrahydrodipicolinate (HTPA) to tetrahydrodipicolinate. The chain is 4-hydroxy-tetrahydrodipicolinate reductase from Cupriavidus necator (strain ATCC 17699 / DSM 428 / KCTC 22496 / NCIMB 10442 / H16 / Stanier 337) (Ralstonia eutropha).